We begin with the raw amino-acid sequence, 328 residues long: Ribosomal RNA small subunit methyltransferase H (328 aa).

S-adenosyl-L-methionine is bound by residues 37 to 39, Asp-57, Phe-83, Asp-104, and Gln-111; that span reads GGH.

The protein belongs to the methyltransferase superfamily. RsmH family.

It is found in the cytoplasm. The catalysed reaction is cytidine(1402) in 16S rRNA + S-adenosyl-L-methionine = N(4)-methylcytidine(1402) in 16S rRNA + S-adenosyl-L-homocysteine + H(+). Its function is as follows. Specifically methylates the N4 position of cytidine in position 1402 (C1402) of 16S rRNA. This Neisseria meningitidis serogroup C / serotype 2a (strain ATCC 700532 / DSM 15464 / FAM18) protein is Ribosomal RNA small subunit methyltransferase H.